A 571-amino-acid chain; its full sequence is Proline--tRNA ligase (571 aa).

It belongs to the class-II aminoacyl-tRNA synthetase family. ProS type 1 subfamily. As to quaternary structure, homodimer.

The protein resides in the cytoplasm. The catalysed reaction is tRNA(Pro) + L-proline + ATP = L-prolyl-tRNA(Pro) + AMP + diphosphate. Its function is as follows. Catalyzes the attachment of proline to tRNA(Pro) in a two-step reaction: proline is first activated by ATP to form Pro-AMP and then transferred to the acceptor end of tRNA(Pro). As ProRS can inadvertently accommodate and process non-cognate amino acids such as alanine and cysteine, to avoid such errors it has two additional distinct editing activities against alanine. One activity is designated as 'pretransfer' editing and involves the tRNA(Pro)-independent hydrolysis of activated Ala-AMP. The other activity is designated 'posttransfer' editing and involves deacylation of mischarged Ala-tRNA(Pro). The misacylated Cys-tRNA(Pro) is not edited by ProRS. This is Proline--tRNA ligase from Stutzerimonas stutzeri (strain A1501) (Pseudomonas stutzeri).